A 69-amino-acid chain; its full sequence is Conotoxin SIVA (69 aa).

Residues 1 to 21 (MGMRMMFTVFLLVVLATTVVS) form the signal peptide. A propeptide spanning residues 22–38 (TPSDRASDGRNAAVHER) is cleaved from the precursor. Gln-39 is modified (pyrrolidone carboxylic acid). Residue Ser-45 is glycosylated (O-linked (HexNAc...) serine). Residues Pro-55, Pro-60, and Pro-61 each carry the 4-hydroxyproline modification. Cys-68 bears the Cysteine amide mark.

This sequence belongs to the conotoxin A superfamily. Contains 3 disulfide bonds. Post-translationally, O-linked glycan consists of Hex3-HexNAc2 pentasaccharide. Expressed by the venom duct.

The protein resides in the secreted. Its function is as follows. Neurotoxin with probable activity on sodium channel. Induces intense repetitive firing of the frog neuromuscular junction, leading to a tetanic contracture in muscle fiber (spastic paralysis). In vivo, shows the same effect as the whole venom when injected on fish. Intraperitoneal injection into fish induces a period of rapid swimming followed by a spastic paralysis with stiff fibrillating fins. At high doses, the peptide is lethal to both fish and mice. The protein is Conotoxin SIVA of Conus striatus (Striated cone).